The primary structure comprises 404 residues: Photosynthetic reaction center cytochrome c subunit (404 aa).

The signal sequence occupies residues 1–22 (MSPAQQLTLPAVIVVASVMLLG). Cys23 carries N-palmitoyl cysteine lipidation. Residue Cys23 is the site of S-diacylglycerol cysteine attachment. Positions 94, 107, 110, 111, 130, 144, 152, 155, 156, 236, 247, 250, 251, 307, 310, and 311 each coordinate heme. The disordered stretch occupies residues 346 to 404 (ASEAAPAAATEAAPEAPAQEVPAAEAVPAAAEPGAAEAAGSVEPAPVEEVAPAPAAQRL).

Component of the photosynthetic reaction center composed of protein subunits L (PufL), M (PufM), H (PuhA) and cytochrome C (PufC). The reaction center interacts with light-harvesting antenna complex LH1. In terms of processing, binds 4 heme groups per subunit.

The protein resides in the cellular chromatophore membrane. Its function is as follows. The reaction center of purple bacteria contains a tightly bound cytochrome molecule which re-reduces the photo oxidized primary electron donor. The sequence is that of Photosynthetic reaction center cytochrome c subunit from Thermochromatium tepidum (Chromatium tepidum).